We begin with the raw amino-acid sequence, 179 residues long: Large ribosomal subunit protein uL5c (179 aa).

It belongs to the universal ribosomal protein uL5 family. Part of the 50S ribosomal subunit; contacts the 5S rRNA.

It localises to the plastid. Its subcellular location is the chloroplast. Functionally, binds 5S rRNA, forms part of the central protuberance of the 50S subunit. This chain is Large ribosomal subunit protein uL5c (rpl5), found in Gracilaria tenuistipitata var. liui (Red alga).